A 362-amino-acid chain; its full sequence is Spermidine/putrescine import ATP-binding protein PotA (362 aa).

The ABC transporter domain occupies 4–235 (IKLDHITKQY…PVNDFVARFI (232 aa)). An ATP-binding site is contributed by 37–44 (GPSGSGKT).

This sequence belongs to the ABC transporter superfamily. Spermidine/putrescine importer (TC 3.A.1.11.1) family. As to quaternary structure, the complex is composed of two ATP-binding proteins (PotA), two transmembrane proteins (PotB and PotC) and a solute-binding protein (PotD).

The protein localises to the cell membrane. The enzyme catalyses ATP + H2O + polyamine-[polyamine-binding protein]Side 1 = ADP + phosphate + polyamineSide 2 + [polyamine-binding protein]Side 1.. Functionally, part of the ABC transporter complex PotABCD involved in spermidine/putrescine import. Responsible for energy coupling to the transport system. The sequence is that of Spermidine/putrescine import ATP-binding protein PotA from Lactobacillus delbrueckii subsp. bulgaricus (strain ATCC 11842 / DSM 20081 / BCRC 10696 / JCM 1002 / NBRC 13953 / NCIMB 11778 / NCTC 12712 / WDCM 00102 / Lb 14).